Here is a 674-residue protein sequence, read N- to C-terminus: Protein tesmin/TSO1-like CXC 2 (674 aa).

Composition is skewed to polar residues over residues 1-16 (MDTP…TPIS) and 76-89 (THNS…NSVE). Disordered regions lie at residues 1–20 (MDTP…KSRF) and 69–113 (KESR…GLNI). Positions 95 to 109 (STSHEEVPAEGEDTK) are enriched in basic and acidic residues. Residues 373–498 (SCKRCNCKKS…RCEGCKNAFG (126 aa)) form the CRC domain. Disordered regions lie at residues 504–529 (SIDM…SQQN) and 623–655 (IPNI…RRNG). Acidic residues predominate over residues 507–516 (MEAEQEEENE).

It belongs to the lin-54 family. As to expression, ubiquitous but expressed mostly in all the aerial organs with highest expression in flowers.

Its subcellular location is the nucleus. Functionally, plays a role in development of both male and female reproductive tissues. This Arabidopsis thaliana (Mouse-ear cress) protein is Protein tesmin/TSO1-like CXC 2 (TCX2).